The chain runs to 431 residues: Glutamate-1-semialdehyde 2,1-aminomutase (431 aa).

The residue at position 269 (lysine 269) is an N6-(pyridoxal phosphate)lysine.

This sequence belongs to the class-III pyridoxal-phosphate-dependent aminotransferase family. HemL subfamily. In terms of assembly, homodimer. Pyridoxal 5'-phosphate serves as cofactor.

It is found in the cytoplasm. The enzyme catalyses (S)-4-amino-5-oxopentanoate = 5-aminolevulinate. It participates in porphyrin-containing compound metabolism; protoporphyrin-IX biosynthesis; 5-aminolevulinate from L-glutamyl-tRNA(Glu): step 2/2. The sequence is that of Glutamate-1-semialdehyde 2,1-aminomutase from Tolumonas auensis (strain DSM 9187 / NBRC 110442 / TA 4).